The chain runs to 481 residues: Endonuclease Bax1 (481 aa).

An N-terminal domain (NTD) region spans residues 1-136 (MLPWELARFS…EKKIIKAPTI (136 aa)). The central domain (CRD) stretch occupies residues 158-250 (YKLTVYVSSN…LKLANFKELK (93 aa)). Positions 260 to 364 (DSSVEEKFYK…YKRKIDISLV (105 aa)) are nuclease domain (NUS). Residues glutamate 265, aspartate 297, and glutamate 310 each contribute to the a divalent metal cation site. Residues 414-481 (PGYIFLKNYY…AIVIKDKKVN (68 aa)) are C-terminal domain (CTD).

This sequence belongs to the Bax1 family. In terms of assembly, homodimer in solution, forms a heterodimer with XPB2. A divalent metal cation is required as a cofactor.

In terms of biological role, a dual DNA endonuclease probably involved in nucleotide excision repair (NER). The N-terminal nuclease domain (NTD) of the XPB2-Bax1 complex cleaves on one side of a DNA bubble (which presumably mimics DNA damage), while the NUS nuclease domain cleaves the other side, respectively called 5' and 3' nuclease activities. Interaction with XPB blocks the NTD nuclease activity. Binds to and stimulates the ATPase activity (and probably also helicase activity) of XPB2. Increases affinity of XPB2 for forked DNA. Does not stimulate the DNA-dependent activity of XPB1. In an XPB2-Bax1-bubble DNA crystal (12 bp of dsDNA, a 6 base bubble and 6 bp of dsDNA) the short 6 bp arm is unwound. The 2 helicase and the ThM domains of XPB2 with the NTD and CRD domains of Bax1 encircle the DNA, forming a tunnel where the 12 bp dsDNA and the ds-ssDNA junction are located. The ThM domain is wedged between the ssDNA tails, with the 5' ssDNA contacting Bax1 and the 3' ssDNA in a channel in XPB2. The nuclease domain (NUS) of Bax1 does not contact DNA in the bubble DNA complex. The chain is Endonuclease Bax1 from Sulfurisphaera tokodaii (strain DSM 16993 / JCM 10545 / NBRC 100140 / 7) (Sulfolobus tokodaii).